We begin with the raw amino-acid sequence, 926 residues long: Piwi-like protein Ago3 (926 aa).

Residues 1–62 (MADPGKGRGR…PSTSGVSIGG (62 aa)) form a disordered region. The segment covering 26 to 56 (SPSQSESQSPESTPEQSTAPSTIASATPSTS) has biased composition (low complexity). The PAZ domain occupies 339–455 (TVLSLIKEVV…LIPELCQLTG (117 aa)). Residues 620–912 (LVVAICSTKR…LSYLVGQCVH (293 aa)) form the Piwi domain. Gln672 is a binding site for Mg(2+). Residues Asp697, Glu735, Asp767, and His901 contribute to the active site. Leu926 is a Mg(2+) binding site.

The protein belongs to the argonaute family. Piwi subfamily. Interacts (when symmetrically methylated) with Papi/TDRKH. Interacts with Vasa. Requires Mg(2+) as cofactor. Arginine methylation is required for the interaction with Tudor domain-containing protein Papi/TDRKH. Highly expressed in the larval testis, pupal ovary and adult eggs.

It is found in the cytoplasm. Endoribonuclease that plays a central role during spermatogenesis by repressing transposable elements and preventing their mobilization, which is essential for the germline integrity. Plays an essential role in meiotic differentiation of spermatocytes, germ cell differentiation and in self-renewal of spermatogonial stem cells. Its presence in oocytes suggests that it may participate in similar functions during oogenesis in females. Acts via the piRNA metabolic process, which mediates the repression of transposable elements during meiosis by forming complexes composed of piRNAs and Piwi proteins and govern the methylation and subsequent repression of transposons. Directly binds piRNAs, a class of 24 to 30 nucleotide RNAs that are generated by a Dicer-independent mechanism and are primarily derived from transposons and other repeated sequence elements. Strongly prefers a have adenine at position 10 of their guide (g10A preference). Plays a key role in the piRNA amplification loop, also named ping-pong amplification cycle: antisense piRNA-bound Siwi and sense piRNA-bound Ago3 reciprocally cleave complementary transcripts, to couple the amplification of piRNAs with the repression of transposable elements. The polypeptide is Piwi-like protein Ago3 (AGO3) (Bombyx mori (Silk moth)).